Here is a 427-residue protein sequence, read N- to C-terminus: MKRLTGTNEKISNILYQEQLELSKENLDVEATVREIIEKVKEEGDEALRAYSEKFDHVVLSELHVSDQVVNEAFDKIDKDVLTALENAKANIESYHKQQLKGGFEDQPSQGVLRGQLIRPIERVGVYVPGGTAAYPSSVLMNVIPAKIAGVKEIIMITPPQEHFVPAILVAAKLAGVDKIYQVGGAQGIAALAYGTQTLPKVDKITGPGNIFVATAKKLVYGVVGIDMIAGPSEIGVIADSTANPVYVAADLLSQAEHDVHARAILVTNSAELADAVELEIEKQLQTLPRQAIARPSIENNGRIIIAQDVESMFELMNLVAPEHLEIAIDKAYDYLERVQNAGSIFLGHYTSEPIGDYYAGANHVLPTTATSRFSSALGVHDFVKRIQYTQYSKAAVNAAEKDITTLAYAEGLQAHARAIEVRNDKN.

The NAD(+) site is built by Tyr127, Gln187, and Asn210. The substrate site is built by Ser233, Gln255, and His258. 2 residues coordinate Zn(2+): Gln255 and His258. Active-site proton acceptor residues include Glu323 and His324. Substrate-binding residues include His324, Asp357, Glu411, and His416. A Zn(2+)-binding site is contributed by Asp357. His416 is a binding site for Zn(2+).

This sequence belongs to the histidinol dehydrogenase family. Requires Zn(2+) as cofactor.

The catalysed reaction is L-histidinol + 2 NAD(+) + H2O = L-histidine + 2 NADH + 3 H(+). It participates in amino-acid biosynthesis; L-histidine biosynthesis; L-histidine from 5-phospho-alpha-D-ribose 1-diphosphate: step 9/9. Functionally, catalyzes the sequential NAD-dependent oxidations of L-histidinol to L-histidinaldehyde and then to L-histidine. The chain is Histidinol dehydrogenase from Streptococcus mutans serotype c (strain ATCC 700610 / UA159).